We begin with the raw amino-acid sequence, 979 residues long: Protein argonaute PNH1 (979 aa).

Positions 1 to 95 are disordered; that stretch reads MLEVLDMAPP…GGRAGAGPGP (95 aa). The span at 54-67 shows a compositional bias: low complexity; that stretch reads AETAAATAAVAPPE. The span at 77-86 shows a compositional bias: basic residues; that stretch reads GRRRGGRGRG. The region spanning 333–446 is the PAZ domain; it reads PVIEFVAQIL…LPMEACKIVE (114 aa). The region spanning 620–941 is the Piwi domain; it reads LLLAILPDNN…AAFRARFYME (322 aa).

Belongs to the argonaute family. Ago subfamily.

It localises to the cytoplasm. Functionally, probably involved in the RNA silencing pathway. May bind to short RNAs such as microRNAs (miRNAs) or short interfering RNAs (siRNAs), and represses the translation of mRNAs which are complementary to them. Plays a role in the maintenance of the indeterminate state of the stem cells in the shoot apical meristem (SAM). Regulates leaf formation through vascular development and may be involved in determining the central domain of the leaf founder region. The sequence is that of Protein argonaute PNH1 (PHN1) from Oryza sativa subsp. japonica (Rice).